We begin with the raw amino-acid sequence, 297 residues long: Large ribosomal subunit protein uL15m (297 aa).

The N-terminal 22 residues, M1–R22, are a transit peptide targeting the mitochondrion. The disordered stretch occupies residues N27–F68. The segment covering P37 to G53 has biased composition (basic residues).

This sequence belongs to the universal ribosomal protein uL15 family. As to quaternary structure, component of the mitochondrial ribosome large subunit (39S) which comprises a 16S rRNA and about 50 distinct proteins.

The protein localises to the mitochondrion. This chain is Large ribosomal subunit protein uL15m (MRPL15), found in Bos taurus (Bovine).